A 353-amino-acid polypeptide reads, in one-letter code: 4-hydroxy-3-methylbut-2-en-1-yl diphosphate synthase (flavodoxin) (353 aa).

The [4Fe-4S] cluster site is built by cysteine 263, cysteine 266, cysteine 298, and glutamate 305.

This sequence belongs to the IspG family. Requires [4Fe-4S] cluster as cofactor.

It catalyses the reaction (2E)-4-hydroxy-3-methylbut-2-enyl diphosphate + oxidized [flavodoxin] + H2O + 2 H(+) = 2-C-methyl-D-erythritol 2,4-cyclic diphosphate + reduced [flavodoxin]. Its pathway is isoprenoid biosynthesis; isopentenyl diphosphate biosynthesis via DXP pathway; isopentenyl diphosphate from 1-deoxy-D-xylulose 5-phosphate: step 5/6. In terms of biological role, converts 2C-methyl-D-erythritol 2,4-cyclodiphosphate (ME-2,4cPP) into 1-hydroxy-2-methyl-2-(E)-butenyl 4-diphosphate. The sequence is that of 4-hydroxy-3-methylbut-2-en-1-yl diphosphate synthase (flavodoxin) from Geobacter sulfurreducens (strain ATCC 51573 / DSM 12127 / PCA).